Consider the following 623-residue polypeptide: Glutathione import ATP-binding protein GsiA (623 aa).

2 consecutive ABC transporter domains span residues 18–272 and 317–567; these read VRNL…QGLL and LQVS…RKLM. ATP is bound by residues 52–59 and 360–367; these read GESGSGKS and GESGCGKS.

The protein belongs to the ABC transporter superfamily. Glutathione importer (TC 3.A.1.5.11) family. The complex is composed of two ATP-binding proteins (GsiA), two transmembrane proteins (GsiC and GsiD) and a solute-binding protein (GsiB).

The protein resides in the cell inner membrane. The catalysed reaction is glutathione(out) + ATP + H2O = glutathione(in) + ADP + phosphate + H(+). Functionally, part of the ABC transporter complex GsiABCD involved in glutathione import. Responsible for energy coupling to the transport system. The sequence is that of Glutathione import ATP-binding protein GsiA from Pectobacterium atrosepticum (strain SCRI 1043 / ATCC BAA-672) (Erwinia carotovora subsp. atroseptica).